We begin with the raw amino-acid sequence, 244 residues long: uncharacterized protein (244 aa).

This is an uncharacterized protein from Saccharomyces cerevisiae (strain ATCC 204508 / S288c) (Baker's yeast).